The primary structure comprises 29 residues: Potassium channel toxin alpha-KTx 8.4 (29 aa).

Disulfide bonds link C3–C19, C6–C24, and C10–C26.

Belongs to the short scorpion toxin superfamily. Potassium channel inhibitor family. Alpha-KTx 08 subfamily. In terms of tissue distribution, expressed by the venom gland.

Its subcellular location is the secreted. Inhibits voltage-gated potassium channels. In Leiurus hebraeus (Hebrew deathstalker scorpion), this protein is Potassium channel toxin alpha-KTx 8.4.